Here is a 113-residue protein sequence, read N- to C-terminus: Cell cycle protein GpsB (113 aa).

Residues 32 to 70 (LDSVIKDYENFGKEIERMKNENDRLTDKVDELNKQVSAG) adopt a coiled-coil conformation.

Belongs to the GpsB family. In terms of assembly, forms polymers through the coiled coil domains. Interacts with PBP1, MreC and EzrA.

The protein localises to the cytoplasm. Its function is as follows. Divisome component that associates with the complex late in its assembly, after the Z-ring is formed, and is dependent on DivIC and PBP2B for its recruitment to the divisome. Together with EzrA, is a key component of the system that regulates PBP1 localization during cell cycle progression. Its main role could be the removal of PBP1 from the cell pole after pole maturation is completed. Also contributes to the recruitment of PBP1 to the division complex. Not essential for septum formation. This chain is Cell cycle protein GpsB, found in Pediococcus pentosaceus (strain ATCC 25745 / CCUG 21536 / LMG 10740 / 183-1w).